Reading from the N-terminus, the 246-residue chain is Cytochrome c oxidase subunit 2 (246 aa).

2 consecutive transmembrane segments (helical) span residues His-31 to Met-51 and Ile-72 to Leu-92. Cu cation contacts are provided by His-175, Cys-210, Glu-212, Cys-214, His-218, and Met-221. A Mg(2+)-binding site is contributed by Glu-212.

The protein belongs to the cytochrome c oxidase subunit 2 family. Component of the cytochrome c oxidase (complex IV, CIV), a multisubunit enzyme composed of a catalytic core of 3 subunits and several supernumerary subunits. The complex exists as a monomer or a dimer and forms supercomplexes (SCs) in the inner mitochondrial membrane with ubiquinol-cytochrome c oxidoreductase (cytochrome b-c1 complex, complex III, CIII). Cu cation is required as a cofactor.

It is found in the mitochondrion inner membrane. It carries out the reaction 4 Fe(II)-[cytochrome c] + O2 + 8 H(+)(in) = 4 Fe(III)-[cytochrome c] + 2 H2O + 4 H(+)(out). Its function is as follows. Component of the cytochrome c oxidase, the last enzyme in the mitochondrial electron transport chain which drives oxidative phosphorylation. The respiratory chain contains 3 multisubunit complexes succinate dehydrogenase (complex II, CII), ubiquinol-cytochrome c oxidoreductase (cytochrome b-c1 complex, complex III, CIII) and cytochrome c oxidase (complex IV, CIV), that cooperate to transfer electrons derived from NADH and succinate to molecular oxygen, creating an electrochemical gradient over the inner membrane that drives transmembrane transport and the ATP synthase. Cytochrome c oxidase is the component of the respiratory chain that catalyzes the reduction of oxygen to water. Electrons originating from reduced cytochrome c in the intermembrane space (IMS) are transferred via the dinuclear copper A center (CU(A)) of subunit 2 and heme A of subunit 1 to the active site in subunit 1, a binuclear center (BNC) formed by heme A3 and copper B (CU(B)). The BNC reduces molecular oxygen to 2 water molecules using 4 electrons from cytochrome c in the IMS and 4 protons from the mitochondrial matrix. The chain is Cytochrome c oxidase subunit 2 (COX2) from Debaryomyces hansenii (strain ATCC 36239 / CBS 767 / BCRC 21394 / JCM 1990 / NBRC 0083 / IGC 2968) (Yeast).